Here is an 842-residue protein sequence, read N- to C-terminus: Glycogen phosphorylase, muscle form (842 aa).

Position 2 is an N-acetylserine (S2). A Phosphoserine; by PHK; in form phosphorylase A modification is found at S15. A Phosphoserine modification is found at S26. The AMP site is built by D43 and Y76. Phosphotyrosine is present on residues Y204 and Y227. AMP is bound at residue R310–C319. S430 carries the phosphoserine modification. Y473 carries the phosphotyrosine modification. Position 514 is a phosphoserine (S514). N6-(pyridoxal phosphate)lysine is present on K681. A phosphoserine mark is found at S747 and S748.

This sequence belongs to the glycogen phosphorylase family. In terms of assembly, homodimer. Homotetramer; to form the enzymatically active phosphorylase A. It depends on pyridoxal 5'-phosphate as a cofactor. In terms of processing, phosphorylation of Ser-15 converts phosphorylase B (unphosphorylated) to phosphorylase A.

The catalysed reaction is [(1-&gt;4)-alpha-D-glucosyl](n) + phosphate = [(1-&gt;4)-alpha-D-glucosyl](n-1) + alpha-D-glucose 1-phosphate. Allosterically regulated through the non-covalent binding of metabolites, being activated by AMP and inhibited by ATP, ADP, and glucose-6-phosphate. The activity is also controlled by post-translational modifications including phosphorylation. Functionally, allosteric enzyme that catalyzes the rate-limiting step in glycogen catabolism, the phosphorolytic cleavage of glycogen to produce glucose-1-phosphate, and plays a central role in maintaining cellular and organismal glucose homeostasis. The protein is Glycogen phosphorylase, muscle form of Rattus norvegicus (Rat).